Here is a 317-residue protein sequence, read N- to C-terminus: Melanocyte-stimulating hormone receptor (317 aa).

Residues 1 to 37 (MVWQGPQRRLLGSLNGTSPATPHFELAANQTGPRCLE) lie on the Extracellular side of the membrane. 2 N-linked (GlcNAc...) asparagine glycosylation sites follow: asparagine 15 and asparagine 29. Residues 38–63 (VSIPNGLFLSLGLVSVVENVLVVAAI) form a helical membrane-spanning segment. Topologically, residues 64-72 (AKNRNLHSP) are cytoplasmic. Residues 73–93 (MYYFIGCLAVSDLLVSVTNVL) form a helical membrane-spanning segment. The Extracellular segment spans residues 94-118 (ETAVMLLVEAGALAAQAAVVQQLDD). A helical transmembrane segment spans residues 119-140 (IIDVLICGSMVSSLCFLGAIAV). Topologically, residues 141-163 (DRYLSIFYALRYHSIVTLPRAWR) are cytoplasmic. A helical transmembrane segment spans residues 164 to 183 (AISAIWVASVLSSTLFIAYY). The Extracellular segment spans residues 184–191 (NHTAVLLC). The helical transmembrane segment at 192 to 211 (LVSFFVAMLVLMAVLYVHML) threads the bilayer. Residues 212 to 240 (ARARQHARGIARLRKRQHSVHQGFGLKGA) lie on the Cytoplasmic side of the membrane. Residues 241–266 (ATLTILLGIFFLCWGPFFLHLSLMVL) form a helical membrane-spanning segment. Residues 267 to 279 (CPQHPICGCVFQN) lie on the Extracellular side of the membrane. A helical membrane pass occupies residues 280–300 (FNLFLTLIICNSIIDPFIYAF). Residues 301–317 (RSQELRKTLQEVVLCSW) lie on the Cytoplasmic side of the membrane. Residue cysteine 315 is the site of S-palmitoyl cysteine attachment.

The protein belongs to the G-protein coupled receptor 1 family. As to quaternary structure, interacts with MGRN1, but does not undergo MGRN1-mediated ubiquitination; this interaction competes with GNAS-binding and thus inhibits agonist-induced cAMP production. Interacts with OPN3; the interaction results in a decrease in MC1R-mediated cAMP signaling and ultimately a decrease in melanin production in melanocytes.

It localises to the cell membrane. Its function is as follows. Receptor for MSH (alpha, beta and gamma) and ACTH. The activity of this receptor is mediated by G proteins which activate adenylate cyclase. Mediates melanogenesis, the production of eumelanin (black/brown) and phaeomelanin (red/yellow), via regulation of cAMP signaling in melanocytes. This chain is Melanocyte-stimulating hormone receptor (MC1R), found in Canis lupus familiaris (Dog).